The following is a 405-amino-acid chain: Insertion element IS110 uncharacterized 43.6 kDa protein (405 aa).

In Streptomyces coelicolor (strain ATCC BAA-471 / A3(2) / M145), this protein is Insertion element IS110 uncharacterized 43.6 kDa protein.